Reading from the N-terminus, the 418-residue chain is UDP-N-acetylglucosamine 1-carboxyvinyltransferase 2 (418 aa).

22 to 23 lines the phosphoenolpyruvate pocket; sequence KN. Residue Arg93 coordinates UDP-N-acetyl-alpha-D-glucosamine. Catalysis depends on Cys117, which acts as the Proton donor. Cys117 carries the post-translational modification 2-(S-cysteinyl)pyruvic acid O-phosphothioketal. UDP-N-acetyl-alpha-D-glucosamine contacts are provided by residues 122–126, Asp305, and Ile327; that span reads RPIDQ.

It belongs to the EPSP synthase family. MurA subfamily.

It localises to the cytoplasm. It catalyses the reaction phosphoenolpyruvate + UDP-N-acetyl-alpha-D-glucosamine = UDP-N-acetyl-3-O-(1-carboxyvinyl)-alpha-D-glucosamine + phosphate. The protein operates within cell wall biogenesis; peptidoglycan biosynthesis. Cell wall formation. Adds enolpyruvyl to UDP-N-acetylglucosamine. This chain is UDP-N-acetylglucosamine 1-carboxyvinyltransferase 2, found in Clostridium acetobutylicum (strain ATCC 824 / DSM 792 / JCM 1419 / IAM 19013 / LMG 5710 / NBRC 13948 / NRRL B-527 / VKM B-1787 / 2291 / W).